Consider the following 238-residue polypeptide: U2 small nuclear ribonucleoprotein A' (238 aa).

LRR repeat units lie at residues 19–40, 42–63, 64–84, and 89–110; these read KQVT…GITK, TYEV…PRLK, NLKV…DKLP, and HLQS…RILC. Residues 123–161 form the LRRCT domain; that stretch reads NPITDSPNYRYFIVWLIPTLKVLDFSKVKQKELVKAKEL.

This sequence belongs to the U2 small nuclear ribonucleoprotein A family. As to quaternary structure, associated with the spliceosome.

Its subcellular location is the nucleus. Functionally, involved in pre-mRNA splicing. The sequence is that of U2 small nuclear ribonucleoprotein A' (LEA1) from Debaryomyces hansenii (strain ATCC 36239 / CBS 767 / BCRC 21394 / JCM 1990 / NBRC 0083 / IGC 2968) (Yeast).